The sequence spans 167 residues: Large ribosomal subunit protein uL23 (167 aa).

The segment at 1-130 is large ribosomal subunit protein uL23; that stretch reads MNVNEIIKGP…ELEAKNKEIA (130 aa). Disordered regions lie at residues 91–112 and 137–167; these read FEDE…TDEK and QAEL…NSAK. Basic and acidic residues-rich tracts occupy residues 97 to 112 and 137 to 157; these read QDQK…TDEK and QAEL…KIEN. The unknown stretch occupies residues 131–167; that stretch reads EKLAKKQAELAKKESETNENQEKKIENQTENQENSAK. A compositionally biased stretch (polar residues) spans 158–167; it reads QTENQENSAK.

It belongs to the universal ribosomal protein uL23 family. In terms of assembly, part of the 50S ribosomal subunit. Contacts protein L29, and trigger factor when it is bound to the ribosome.

Functionally, one of the early assembly proteins it binds 23S rRNA. One of the proteins that surrounds the polypeptide exit tunnel on the outside of the ribosome. Forms the main docking site for trigger factor binding to the ribosome. In Mesomycoplasma hyopneumoniae (strain 7448) (Mycoplasma hyopneumoniae), this protein is Large ribosomal subunit protein uL23.